The primary structure comprises 1170 residues: Type I restriction enzyme EcoKI endonuclease subunit (1170 aa).

Residues 143–229 adopt a coiled-coil conformation; sequence YHQEVLTLKQ…QERKAYHKEI (87 aa). A DNA-binding region (H-T-H motif) is located at residues 431 to 450; the sequence is NQWFADNPGMSELGLRYYQE. The 182-residue stretch at 458 to 639 folds into the Helicase ATP-binding domain; the sequence is KAIVKGQQEI…GEPVYRYTYR (182 aa). 472–478 lines the ATP pocket; that stretch reads ATGTGKT. The DEAH box motif lies at 574-577; sequence DEAH. Residues 714–879 enclose the Helicase C-terminal domain; that stretch reads ELTNYLDPTG…TLVNEITDSE (166 aa).

It belongs to the HsdR family. In terms of assembly, the type I restriction/modification system is composed of three polypeptides R, M and S. The restriction enzyme has stoichiometry R(2)M(2)S(1). The methyltransferase is composed of M(2)S(1). (Microbial infection) Interacts with Escherichia phage T7 protein Ocr; this interaction leads to the inhibition of the type I bifunctional endonuclease and methyltransferase restriction enzyme R.EcoKI composed of R(2)M(2)S(1). In terms of processing, upon purification after overexpression about one-third has the initiating methionine removed.

The catalysed reaction is Endonucleolytic cleavage of DNA to give random double-stranded fragments with terminal 5'-phosphates, ATP is simultaneously hydrolyzed.. Functionally, the subtype A restriction (R) subunit of a type I restriction enzyme that recognizes 5'-AACN(6)GTGC-3' and cleaves a random distance away. The R subunit is required for both endonuclease and ATPase activities but not for modification. Has endonucleolytic activity that requires Mg(2+), ATP and S-adenosyl-L-methionine (SAM); ATP can be replaced by dATP, no tested molecule could substitute for SAM. Generates double-stranded DNA with no nicks, by cutting one strand then the other within a few seconds. Cleaves only non-methylated DNA, hemi-methylated and fully methylated DNA are not substrates. After locating a non-methylated recognition site, the enzyme complex serves as a molecular motor that translocates DNA in an ATP-dependent manner until a collision occurs that triggers cleavage. In Escherichia coli (strain K12), this protein is Type I restriction enzyme EcoKI endonuclease subunit.